A 342-amino-acid chain; its full sequence is S-adenosylmethionine:tRNA ribosyltransferase-isomerase (342 aa).

This sequence belongs to the QueA family. In terms of assembly, monomer.

Its subcellular location is the cytoplasm. It catalyses the reaction 7-aminomethyl-7-carbaguanosine(34) in tRNA + S-adenosyl-L-methionine = epoxyqueuosine(34) in tRNA + adenine + L-methionine + 2 H(+). It participates in tRNA modification; tRNA-queuosine biosynthesis. In terms of biological role, transfers and isomerizes the ribose moiety from AdoMet to the 7-aminomethyl group of 7-deazaguanine (preQ1-tRNA) to give epoxyqueuosine (oQ-tRNA). This chain is S-adenosylmethionine:tRNA ribosyltransferase-isomerase, found in Campylobacter jejuni subsp. jejuni serotype O:6 (strain 81116 / NCTC 11828).